The chain runs to 117 residues: Nitrogen regulatory protein GlnK1 (117 aa).

ADP is bound by residues T32, G40–Q42, and G92–K95. ATP-binding positions include T32, G40–Q42, and G92–K95.

This sequence belongs to the P(II) protein family. Homotrimer. Interacts and forms stable complexes with the glutamine synthetase GlnA1.

The protein resides in the cytoplasm. Inhibitory effects on GlnA1 are abolished in the presence of the effector 2-oxoglutarate. Its function is as follows. Involved in the regulation of nitrogen metabolism. Regulates the activity of its targets by protein-protein interaction in response to the nitrogen status of the cell. Allows finetuning control of the glutamine synthetase GlnA1 under changing nitrogen availabilities via direct protein interaction. The sequence is that of Nitrogen regulatory protein GlnK1 from Methanosarcina mazei (strain ATCC BAA-159 / DSM 3647 / Goe1 / Go1 / JCM 11833 / OCM 88) (Methanosarcina frisia).